The following is a 548-amino-acid chain: Probable malate:quinone oxidoreductase (548 aa).

Residues 521–548 (DKPQAADSTPKPQLKPQPVQKEVADIAL) are disordered. Residues 530-541 (PKPQLKPQPVQK) are compositionally biased toward low complexity.

It belongs to the MQO family. FAD is required as a cofactor.

The enzyme catalyses (S)-malate + a quinone = a quinol + oxaloacetate. It participates in carbohydrate metabolism; tricarboxylic acid cycle; oxaloacetate from (S)-malate (quinone route): step 1/1. The chain is Probable malate:quinone oxidoreductase from Escherichia coli O139:H28 (strain E24377A / ETEC).